The sequence spans 421 residues: 2',3'-cyclic-nucleotide 3'-phosphodiesterase (421 aa).

S6 and S9 each carry phosphoserine. The residue at position 110 (Y110) is a Phosphotyrosine. The residue at position 170 (S170) is a Phosphoserine. H251 acts as the Proton acceptor in catalysis. Residue T253 coordinates substrate. Catalysis depends on H330, which acts as the Proton donor. T332 provides a ligand contact to substrate. Residue S359 is modified to Phosphoserine. Position 418 is a cysteine methyl ester (C418). Residue C418 is the site of S-farnesyl cysteine attachment. The propeptide at 419–421 is removed in mature form; sequence TII.

Belongs to the 2H phosphoesterase superfamily. CNPase family. In terms of assembly, exists as monomers and homodimers.

It is found in the membrane. It localises to the melanosome. It carries out the reaction a nucleoside 2',3'-cyclic phosphate + H2O = a nucleoside 2'-phosphate + H(+). In terms of biological role, catalyzes the formation of 2'-nucleotide products from 2',3'-cyclic substrates. May participate in RNA metabolism in the myelinating cell, CNP is the third most abundant protein in central nervous system myelin. This is 2',3'-cyclic-nucleotide 3'-phosphodiesterase from Homo sapiens (Human).